The chain runs to 165 residues: MSSVFSGDETAPFFGFLGAASALIFSCMGAAYGTAKSGVGVASMGVMRPELVMKSIVPVVMAGVLGIYGLIIAVIISTGINPKAKPYYLFDGYAHLSSGLACGLAGLAAGMAIGIVGDAGVRANAQQPKLFVGMILILIFAEALALYGLIVGIILSSRAGQSRAD.

Residues 1–10 are Lumenal-facing; it reads MSSVFSGDET. A helical membrane pass occupies residues 11–33; the sequence is APFFGFLGAASALIFSCMGAAYG. Residues 34 to 55 are Cytoplasmic-facing; that stretch reads TAKSGVGVASMGVMRPELVMKS. Residues 56-76 traverse the membrane as a helical segment; the sequence is IVPVVMAGVLGIYGLIIAVII. At 77 to 95 the chain is on the lumenal side; it reads STGINPKAKPYYLFDGYAH. A helical membrane pass occupies residues 96–117; that stretch reads LSSGLACGLAGLAAGMAIGIVG. At 118 to 129 the chain is on the cytoplasmic side; sequence DAGVRANAQQPK. A helical membrane pass occupies residues 130–155; that stretch reads LFVGMILILIFAEALALYGLIVGIIL. The Lumenal segment spans residues 156–165; sequence SSRAGQSRAD.

This sequence belongs to the V-ATPase proteolipid subunit family. V-ATPase is a heteromultimeric enzyme composed of a peripheral catalytic V1 complex (main components: subunits A, B, C, D, E, and F) attached to an integral membrane V0 proton pore complex (main component: the proteolipid protein; which is present as a hexamer that forms the proton-conducting pore).

It localises to the vacuole membrane. Its function is as follows. Proton-conducting pore forming subunit of the membrane integral V0 complex of vacuolar ATPase. V-ATPase is responsible for acidifying a variety of intracellular compartments in eukaryotic cells. The sequence is that of V-type proton ATPase 16 kDa proteolipid subunit (VATP-P1) from Oryza sativa subsp. indica (Rice).